Consider the following 28-residue polypeptide: Mu-theraphotoxin-Hsp1a (28 aa).

3 cysteine pairs are disulfide-bonded: Cys2/Cys16, Cys9/Cys21, and Cys15/Cys25. Asn28 carries the asparagine amide modification.

Belongs to the neurotoxin 30 (phrixotoxin) family. As to expression, expressed by the venom gland.

It localises to the secreted. In terms of biological role, potent and selective inhibitor of Nav1.7/SCN9A sodium channels. Inhibits Nav1.7/SCN9A peak current (IC(50)=13 nM). In vivo, does not induce visible signs of toxicity when intravenously injected into mice. This chain is Mu-theraphotoxin-Hsp1a, found in Homoeomma sp. (Peruvian tarantula).